The chain runs to 139 residues: Autophagy-related protein 31 (139 aa).

The protein belongs to the ATG31 family. Forms a stable complex with ATG17 and ATG29. Interacts directly with ATG29. The ATG17-ATG29-ATG31 complex interacts with the ATG1-ATG13 complex. Note=The interaction with the ATG1-ATG13 complex is induced by starvation.

The protein resides in the preautophagosomal structure. Its function is as follows. Plays a role in starvation-induced autophagy. Involved in mitophagy. Functions with ATG17 and ATG29 at the preautophagosomal structure (PAS) in order to form normal autophagosomes under starvation conditions. The sequence is that of Autophagy-related protein 31 from Kluyveromyces marxianus (strain DMKU3-1042 / BCC 29191 / NBRC 104275) (Yeast).